The sequence spans 539 residues: O-phosphoserine--tRNA(Cys) ligase (539 aa).

Residues 188-190 (HMT), 233-235 (SAS), 275-276 (YY), and Asn-327 contribute to the substrate site.

The protein belongs to the class-II aminoacyl-tRNA synthetase family. O-phosphoseryl-tRNA(Cys) synthetase subfamily. In terms of assembly, homotetramer. Interacts with SepCysS.

It catalyses the reaction tRNA(Cys) + O-phospho-L-serine + ATP = O-phospho-L-seryl-tRNA(Cys) + AMP + diphosphate. Its function is as follows. Catalyzes the attachment of O-phosphoserine (Sep) to tRNA(Cys). The protein is O-phosphoserine--tRNA(Cys) ligase of Methanococcoides burtonii (strain DSM 6242 / NBRC 107633 / OCM 468 / ACE-M).